Here is a 284-residue protein sequence, read N- to C-terminus: 3-oxoadipate:acetyl-CoA acetyltransferase (284 aa).

Residues H47, H49, and E229 each coordinate Zn(2+).

It belongs to the BKACE family. Zn(2+) is required as a cofactor.

It catalyses the reaction 3-oxoadipate + acetyl-CoA = acetoacetate + succinyl-CoA. Its function is as follows. Catalyzes the condensation of 3-oxoadipate (beta-ketoadipate) and acetyl-CoA, forming acetoacetate and succinyl-CoA. Is likely involved is the degradation of 3-oxoadipate through an alternative pathway, within catechol degradation. This is 3-oxoadipate:acetyl-CoA acetyltransferase from Cupriavidus necator (strain ATCC 17699 / DSM 428 / KCTC 22496 / NCIMB 10442 / H16 / Stanier 337) (Ralstonia eutropha).